The sequence spans 392 residues: uncharacterized protein (392 aa).

It belongs to the chlamydial CPn_0675/CT_696/TC_0068 family.

This is an uncharacterized protein from Chlamydia muridarum (strain MoPn / Nigg).